We begin with the raw amino-acid sequence, 1002 residues long: Golgin subfamily A member 2 (1002 aa).

Residues 1 to 11 (MWPQPRLPPRP) are compositionally biased toward pro residues. The tract at residues 1 to 84 (MWPQPRLPPR…AATLQPSDDT (84 aa)) is interaction with p115/USO1. Positions 1-107 (MWPQPRLPPR…TSMAASQNHD (107 aa)) are disordered. Residues 16-892 (ETRQSKLAAA…LELQELVLRL (877 aa)) are a coiled coil. Dimethylated arginine is present on residues Arg-18, Arg-30, and Arg-35. The Nuclear localization signal motif lies at 26–49 (KKKLREYQQRNSPGVPTGAKKKKK). Ser-37 is subject to Phosphoserine. The span at 52–63 (NGSNPETTTSGG) shows a compositional bias: polar residues. Ser-66 is modified (phosphoserine). Positions 95 to 105 (ASLTSMAASQN) are enriched in polar residues. Phosphoserine occurs at positions 273, 438, and 690. The disordered stretch occupies residues 694–724 (HPGEGDGLDREEEEDEEEEEEEAVAVPQPMP). Over residues 702–716 (DREEEEDEEEEEEEA) the composition is skewed to acidic residues. 3 positions are modified to phosphoserine: Ser-937, Ser-953, and Ser-981. The tract at residues 992–1002 (DENDEVKITVI) is interaction with GORASP1/GRASP65.

This sequence belongs to the GOLGA2 family. In terms of assembly, homodimer, may assemble into homohexamers. Homotetramer; forms a parallel homotetramer with a flexible rod-like structure that can give rise to I- and Y-shaped conformations. Interacts with GORASP1/GRASP65. The homooligomer forms a complex with GORASP1 with a 1:1 stoichiometry. Interacts with RAB1B that has been activated by GTP-binding. Interacts with p115/USO1; interaction with p115/USO1 inhibits interaction with STX5 and/or RAB1B. Interacts with STX5. Interacts with ZFPL1. Interacts with AKAP450/AKAP9; leading to recruit AKAP450/AKAP9 to the cis-Golgi. Post-translationally, cleaved by caspases at the onset of apoptosis. In terms of processing, methylation by PRMT5 is required for Golgi ribbon formation. While dimethylation at Arg-30 and Arg-35 are confirmed in vivo, it is unclear whether Arg-18 is methylated in vivo. Phosphorylated at Ser-37 by CDK1 at the onset of mitosis, inhibiting the interaction with p115/USO1 and triggering Golgi disassembly. Phosphorylated at Ser-37 in prophase as the Golgi complex starts to break down, and remains phosphorylated during further breakdown and partitioning of the Golgi fragments in metaphase and anaphase. In telophase, GM130 is dephosphorylated by PP2A as the Golgi fragments start to reassemble.

Its subcellular location is the golgi apparatus. The protein resides in the cis-Golgi network membrane. The protein localises to the endoplasmic reticulum-Golgi intermediate compartment membrane. It localises to the cytoplasm. It is found in the cytoskeleton. Its subcellular location is the spindle pole. Peripheral membrane component of the cis-Golgi stack that acts as a membrane skeleton that maintains the structure of the Golgi apparatus, and as a vesicle thether that facilitates vesicle fusion to the Golgi membrane. Required for normal protein transport from the endoplasmic reticulum to the Golgi apparatus and the cell membrane. Together with p115/USO1 and STX5, involved in vesicle tethering and fusion at the cis-Golgi membrane to maintain the stacked and inter-connected structure of the Golgi apparatus. Plays a central role in mitotic Golgi disassembly: phosphorylation at Ser-37 by CDK1 at the onset of mitosis inhibits the interaction with p115/USO1, preventing tethering of COPI vesicles and thereby inhibiting transport through the Golgi apparatus during mitosis. Also plays a key role in spindle pole assembly and centrosome organization. Promotes the mitotic spindle pole assembly by activating the spindle assembly factor TPX2 to nucleate microtubules around the Golgi and capture them to couple mitotic membranes to the spindle: upon phosphorylation at the onset of mitosis, GOLGA2 interacts with importin-alpha via the nuclear localization signal region, leading to recruit importin-alpha to the Golgi membranes and liberate the spindle assembly factor TPX2 from importin-alpha. TPX2 then activates AURKA kinase and stimulates local microtubule nucleation. Upon filament assembly, nascent microtubules are further captured by GOLGA2, thus linking Golgi membranes to the spindle. Regulates the meiotic spindle pole assembly, probably via the same mechanism. Also regulates the centrosome organization. Also required for the Golgi ribbon formation and glycosylation of membrane and secretory proteins. The chain is Golgin subfamily A member 2 (GOLGA2) from Homo sapiens (Human).